The primary structure comprises 164 residues: Peptide deformylase (164 aa).

Positions 87 and 129 each coordinate Fe cation. The active site involves E130. H133 contributes to the Fe cation binding site.

Belongs to the polypeptide deformylase family. Fe(2+) serves as cofactor.

It carries out the reaction N-terminal N-formyl-L-methionyl-[peptide] + H2O = N-terminal L-methionyl-[peptide] + formate. In terms of biological role, removes the formyl group from the N-terminal Met of newly synthesized proteins. Requires at least a dipeptide for an efficient rate of reaction. N-terminal L-methionine is a prerequisite for activity but the enzyme has broad specificity at other positions. This chain is Peptide deformylase, found in Thermotoga neapolitana (strain ATCC 49049 / DSM 4359 / NBRC 107923 / NS-E).